The primary structure comprises 520 residues: Sodium-dependent dicarboxylate transporter SdcS (520 aa).

14 consecutive transmembrane segments (helical) span residues 30-50 (TGQL…LLFF), 55-75 (LPWK…WWIT), 77-97 (AIPI…GHIL), 104-124 (SEYG…AIAM), 160-180 (SMFV…LAII), 207-227 (IGYA…PLII), 242-262 (FAKW…ITWL), 298-318 (KVVQ…EFLL), 323-343 (VTSS…LFII), 362-382 (ELPW…KGIS), 399-419 (GVSP…LTEV), 428-448 (MILP…LLLM), 452-472 (AMAA…AIIF), and 491-511 (LISA…VLGI).

The protein belongs to the SLC13A/DASS transporter (TC 2.A.47) family. NADC subfamily.

Its subcellular location is the cell membrane. Mediates the transport of the dicarboxylates fumarate, malate, and succinate across the cytoplasmic membrane via a Na(+)-electrochemical gradient. The sequence is that of Sodium-dependent dicarboxylate transporter SdcS (sdcS) from Staphylococcus aureus (strain MRSA252).